An 887-amino-acid chain; its full sequence is ATP-dependent DNA helicase srs2 (887 aa).

The UvrD-like helicase ATP-binding domain occupies Lys9 to Ala304. ATP-binding positions include Gly33 to Arg38 and Arg302. Positions Lys305 to Gly597 constitute a UvrD-like helicase C-terminal domain.

It belongs to the helicase family. UvrD subfamily.

Its subcellular location is the nucleus. It carries out the reaction Couples ATP hydrolysis with the unwinding of duplex DNA by translocating in the 3'-5' direction.. The catalysed reaction is ATP + H2O = ADP + phosphate + H(+). Its function is as follows. ATP-dependent DNA helicase involved in DNA repair at least for UV-induced lesions. Also aids the recombinational repair of camptothecin-induced collapsed replication forks. The protein is ATP-dependent DNA helicase srs2 (srs2) of Schizosaccharomyces pombe (strain 972 / ATCC 24843) (Fission yeast).